The primary structure comprises 367 residues: Adenine deaminase (367 aa).

Histidine 19, histidine 21, and histidine 209 together coordinate Zn(2+). Catalysis depends on glutamate 212, which acts as the Proton donor. A Zn(2+)-binding site is contributed by aspartate 290. Aspartate 291 serves as a coordination point for substrate.

The protein belongs to the metallo-dependent hydrolases superfamily. Adenosine and AMP deaminases family. Adenine deaminase type 2 subfamily. The cofactor is Zn(2+).

It localises to the cytoplasm. It is found in the nucleus. The catalysed reaction is adenine + H2O + H(+) = hypoxanthine + NH4(+). Its function is as follows. Catalyzes the hydrolytic deamination of adenine to hypoxanthine. Plays an important role in the purine salvage pathway and in nitrogen catabolism. Also exhibits a low activity towards N(6)-substituted adenines that are commonly known as the plant hormones cytokinins. This Schizosaccharomyces pombe (strain 972 / ATCC 24843) (Fission yeast) protein is Adenine deaminase.